A 482-amino-acid chain; its full sequence is Proline--tRNA ligase (482 aa).

Belongs to the class-II aminoacyl-tRNA synthetase family. ProS type 3 subfamily. In terms of assembly, homodimer.

It localises to the cytoplasm. The enzyme catalyses tRNA(Pro) + L-proline + ATP = L-prolyl-tRNA(Pro) + AMP + diphosphate. Functionally, catalyzes the attachment of proline to tRNA(Pro) in a two-step reaction: proline is first activated by ATP to form Pro-AMP and then transferred to the acceptor end of tRNA(Pro). The sequence is that of Proline--tRNA ligase from Natronomonas pharaonis (strain ATCC 35678 / DSM 2160 / CIP 103997 / JCM 8858 / NBRC 14720 / NCIMB 2260 / Gabara) (Halobacterium pharaonis).